The sequence spans 308 residues: Cobalamin biosynthesis protein CobD (308 aa).

6 consecutive transmembrane segments (helical) span residues M1–P21, F50–F70, L71–F91, I151–M171, V202–G222, and L284–F304.

The protein belongs to the CobD/CbiB family.

Its subcellular location is the cell membrane. The protein operates within cofactor biosynthesis; adenosylcobalamin biosynthesis. Its function is as follows. Converts cobyric acid to cobinamide by the addition of aminopropanol on the F carboxylic group. The polypeptide is Cobalamin biosynthesis protein CobD (Dehalococcoides mccartyi (strain CBDB1)).